We begin with the raw amino-acid sequence, 386 residues long: Putative F-box/kelch-repeat protein At4g11750 (386 aa).

The region spanning 5–51 is the F-box domain; that stretch reads PVDLPYIPDDLLLNCLARVSRLYYPILSLVSKRFRSLVASLELYEIR. Kelch repeat units follow at residues 187 to 236, 238 to 285, and 287 to 324; these read KIYV…VYDG, LYLF…YGRS, and VLMW…GYSG.

The protein is Putative F-box/kelch-repeat protein At4g11750 of Arabidopsis thaliana (Mouse-ear cress).